The sequence spans 2004 residues: Alpha-2-macroglobulin homolog (2004 aa).

An N-terminal signal peptide occupies residues 1 to 27 (MLCCLVFKGLLSMDLLRFLLISPFALI).

The protein belongs to the protease inhibitor I39 (alpha-2-macroglobulin) family. Bacterial alpha-2-macroglobulin subfamily.

This chain is Alpha-2-macroglobulin homolog, found in Yersinia pestis.